Consider the following 241-residue polypeptide: Large ribosomal subunit protein uL3 (241 aa).

The interval 140 to 168 is disordered; it reads SHRSIGSTGGRQDPGKTFKNKKMPGHMGD. Residue Gln-151 is modified to N5-methylglutamine.

The protein belongs to the universal ribosomal protein uL3 family. Part of the 50S ribosomal subunit. Forms a cluster with proteins L14 and L19. In terms of processing, methylated by PrmB.

One of the primary rRNA binding proteins, it binds directly near the 3'-end of the 23S rRNA, where it nucleates assembly of the 50S subunit. The chain is Large ribosomal subunit protein uL3 from Azorhizobium caulinodans (strain ATCC 43989 / DSM 5975 / JCM 20966 / LMG 6465 / NBRC 14845 / NCIMB 13405 / ORS 571).